Consider the following 67-residue polypeptide: MPKLKTRRAAAKRFKLTGSGKKIARRKAFKNHLLNHKSAEQKRRRLSGMALVDKSDEKNVRLMLPYA.

This sequence belongs to the bacterial ribosomal protein bL35 family.

The sequence is that of Large ribosomal subunit protein bL35 from Picosynechococcus sp. (strain ATCC 27264 / PCC 7002 / PR-6) (Agmenellum quadruplicatum).